A 427-amino-acid polypeptide reads, in one-letter code: Serine--tRNA ligase (427 aa).

L-serine is bound at residue 231 to 233; the sequence is TAE. 262–264 is an ATP binding site; that stretch reads RSE. Glu285 contributes to the L-serine binding site. Position 349 to 352 (349 to 352) interacts with ATP; it reads EISS. L-serine is bound at residue Ser385.

Belongs to the class-II aminoacyl-tRNA synthetase family. Type-1 seryl-tRNA synthetase subfamily. Homodimer. The tRNA molecule binds across the dimer.

Its subcellular location is the cytoplasm. The catalysed reaction is tRNA(Ser) + L-serine + ATP = L-seryl-tRNA(Ser) + AMP + diphosphate + H(+). It carries out the reaction tRNA(Sec) + L-serine + ATP = L-seryl-tRNA(Sec) + AMP + diphosphate + H(+). Its pathway is aminoacyl-tRNA biosynthesis; selenocysteinyl-tRNA(Sec) biosynthesis; L-seryl-tRNA(Sec) from L-serine and tRNA(Sec): step 1/1. In terms of biological role, catalyzes the attachment of serine to tRNA(Ser). Is also able to aminoacylate tRNA(Sec) with serine, to form the misacylated tRNA L-seryl-tRNA(Sec), which will be further converted into selenocysteinyl-tRNA(Sec). The sequence is that of Serine--tRNA ligase from Rhizobium leguminosarum bv. trifolii (strain WSM2304).